The sequence spans 465 residues: Adenosylhomocysteinase (465 aa).

Substrate contacts are provided by Thr56, Asp131, and Glu191. 192-194 is an NAD(+) binding site; that stretch reads TTT. Substrate is bound by residues Lys221 and Asp225. NAD(+)-binding positions include Asn226, 255 to 260, Glu278, Asn313, 334 to 336, and Asn379; these read GYGDVG and IGH.

This sequence belongs to the adenosylhomocysteinase family. The cofactor is NAD(+).

The protein resides in the cytoplasm. The catalysed reaction is S-adenosyl-L-homocysteine + H2O = L-homocysteine + adenosine. Its pathway is amino-acid biosynthesis; L-homocysteine biosynthesis; L-homocysteine from S-adenosyl-L-homocysteine: step 1/1. May play a key role in the regulation of the intracellular concentration of adenosylhomocysteine. The protein is Adenosylhomocysteinase of Bartonella henselae (strain ATCC 49882 / DSM 28221 / CCUG 30454 / Houston 1) (Rochalimaea henselae).